Here is a 432-residue protein sequence, read N- to C-terminus: Amino-acid acetyltransferase (432 aa).

The region spanning 286 to 425 (EQLREAGIED…ASLYNFQRNS (140 aa)) is the N-acetyltransferase domain.

The protein belongs to the acetyltransferase family. ArgA subfamily.

The protein localises to the cytoplasm. It carries out the reaction L-glutamate + acetyl-CoA = N-acetyl-L-glutamate + CoA + H(+). Its pathway is amino-acid biosynthesis; L-arginine biosynthesis; N(2)-acetyl-L-ornithine from L-glutamate: step 1/4. This chain is Amino-acid acetyltransferase, found in Pseudomonas paraeruginosa (strain DSM 24068 / PA7) (Pseudomonas aeruginosa (strain PA7)).